The chain runs to 283 residues: Acetyl-coenzyme A carboxylase carboxyl transferase subunit beta (283 aa).

The CoA carboxyltransferase N-terminal domain maps to 27-283; it reads VWVKCERCGE…LLDLHLRGEK (257 aa). Zn(2+) is bound by residues C31, C34, C50, and C53. The segment at 31-53 adopts a C4-type zinc-finger fold; the sequence is CERCGEILFKKELDKNYKVCLKC.

Belongs to the AccD/PCCB family. In terms of assembly, acetyl-CoA carboxylase is a heterohexamer composed of biotin carboxyl carrier protein (AccB), biotin carboxylase (AccC) and two subunits each of ACCase subunit alpha (AccA) and ACCase subunit beta (AccD). Zn(2+) is required as a cofactor.

It localises to the cytoplasm. It catalyses the reaction N(6)-carboxybiotinyl-L-lysyl-[protein] + acetyl-CoA = N(6)-biotinyl-L-lysyl-[protein] + malonyl-CoA. The protein operates within lipid metabolism; malonyl-CoA biosynthesis; malonyl-CoA from acetyl-CoA: step 1/1. In terms of biological role, component of the acetyl coenzyme A carboxylase (ACC) complex. Biotin carboxylase (BC) catalyzes the carboxylation of biotin on its carrier protein (BCCP) and then the CO(2) group is transferred by the transcarboxylase to acetyl-CoA to form malonyl-CoA. The polypeptide is Acetyl-coenzyme A carboxylase carboxyl transferase subunit beta (Pelotomaculum thermopropionicum (strain DSM 13744 / JCM 10971 / SI)).